An 894-amino-acid chain; its full sequence is Valine--tRNA ligase (894 aa).

Residues 1–22 (MKSIQTPSKSHTNTKETPVMSQ) show a composition bias toward polar residues. Residues 1-28 (MKSIQTPSKSHTNTKETPVMSQEETKGY) form a disordered region. Positions 69-79 (PNVTGSLHIGH) match the 'HIGH' region motif. The 'KMSKS' region signature appears at 554 to 558 (KMSKS). ATP is bound at residue lysine 557. Positions 832 to 894 (IISRLEKQQE…VKVELQGIKG (63 aa)) form a coiled coil.

Belongs to the class-I aminoacyl-tRNA synthetase family. ValS type 1 subfamily. Monomer.

The protein resides in the cytoplasm. It catalyses the reaction tRNA(Val) + L-valine + ATP = L-valyl-tRNA(Val) + AMP + diphosphate. Its function is as follows. Catalyzes the attachment of valine to tRNA(Val). As ValRS can inadvertently accommodate and process structurally similar amino acids such as threonine, to avoid such errors, it has a 'posttransfer' editing activity that hydrolyzes mischarged Thr-tRNA(Val) in a tRNA-dependent manner. The sequence is that of Valine--tRNA ligase from Wolinella succinogenes (strain ATCC 29543 / DSM 1740 / CCUG 13145 / JCM 31913 / LMG 7466 / NCTC 11488 / FDC 602W) (Vibrio succinogenes).